The primary structure comprises 59 residues: Conorfamide-Ep1 (59 aa).

The N-terminal stretch at 1–19 (MSGCGFLLLALLLLVTVEA) is a signal peptide. Residues 20–25 (TKMEKK) constitute a propeptide that is removed on maturation. Ile43 carries the post-translational modification Isoleucine amide. The propeptide occupies 45–59 (RRDMQSPLLSERLRF).

It belongs to the FARP (FMRFamide related peptide) family. Expressed by the venom duct.

Its subcellular location is the secreted. Neurotoxin that is active on vertebrates. When tested at high doses (10 uM), the toxin affects all zebrafish and mouse DRG neurons in culture, which could be an indication of an effect on a widely expressed receptor or ion channel found in both species. At low doses (1 uM), the effects of the toxin are confined to a specific subpopulation of zebrafish and mouse DRG neurons. In vivo, it induces long-lasting dramatic alterations in the locomotor behavior of zebrafish larvae. It rapidly induces hypoactivity and death of larvae at high doses and it causes hyperactivity at lower doses. In zebrafish adults, intramuscular injection causes the decrease of the movements and visited spaces. In mice, intracranial injection causes lethargy and prolonges sleeping phases and reduced movement. The sequence is that of Conorfamide-Ep1 from Conus episcopatus (Bishop's cone).